A 617-amino-acid chain; its full sequence is AUGMIN subunit 3 (617 aa).

Coiled-coil stretches lie at residues 107–140 (DATL…SSAL), 314–334 (LHSL…LYQK), and 481–504 (AIIQ…ENSL).

This sequence belongs to the HAUS3 family. In terms of assembly, part of the augmin complex composed of 8 subunits. The complex acts on microtubules and interacts with gamma-tubulin in spindles and the phragmoplast. Interacts with AUG1.

The protein resides in the cytoplasm. Its subcellular location is the cytoskeleton. The protein localises to the spindle. It is found in the phragmoplast. Functionally, involved in microtubules reorganization during spindle and phragmoplast development. Required for gamma-tubulin localization during mitosis. In Arabidopsis thaliana (Mouse-ear cress), this protein is AUGMIN subunit 3.